The sequence spans 731 residues: Anaphase-promoting complex subunit 2 (731 aa).

Belongs to the cullin family. The APC/C is probably composed of at least 12 subunits: apc-2, apc-10, apc-11, cdc-26, emb-1, emb-27, emb-30, mat-1, mat-2, mat-3, such-1 and gfi-3.

It participates in protein modification; protein ubiquitination. Probable component of the anaphase promoting complex/cyclosome (APC/C), a cell cycle-regulated ubiquitin ligase that controls progression through mitosis and the G1 phase of the cell cycle. The APC/C complex acts by mediating ubiquitination and subsequent degradation of target proteins. Developmental role in early embryogenesis and the metaphase to anaphase transition in meiosis and mitosis. The protein is Anaphase-promoting complex subunit 2 of Caenorhabditis elegans.